A 491-amino-acid polypeptide reads, in one-letter code: 4,4'-diapolycopen-4-al dehydrogenase (491 aa).

Glutamate 208 is a catalytic residue.

The protein belongs to the carotenoid/retinoid oxidoreductase family. CrtN subfamily.

The enzyme catalyses all-trans-4,4'-diapolycopen-4-al + A + H2O = all-trans-4,4'-diapolycopen-4-oate + AH2 + H(+). The protein operates within carotenoid biosynthesis. Its function is as follows. Involved in the biosynthesis of the major C30 carotenoid methyl 4'-[6-O-(acylglycosyl)oxy]-4,4'-diapolycopen-4-oic acid via 4,4'-diapolycopen-4-oic acid intermediate. Catalyzes the oxidation of 4,4'-diapolycopen-4-al to yield 4,4'-diapolycopen-4-oic acid. The sequence is that of 4,4'-diapolycopen-4-al dehydrogenase from Metabacillus indicus (Bacillus indicus).